We begin with the raw amino-acid sequence, 465 residues long: Ubiquitin carboxyl-terminal hydrolase UCH54 (465 aa).

In terms of domain architecture, UCH catalytic spans 11–333 (EWCLIESNPC…VRFNIIAVMK (323 aa)). Catalysis depends on C145, which acts as the Nucleophile. Catalysis depends on H220, which acts as the Proton donor. The tract at residues 244–293 (INADEQNKPNPNNNNNNKDNDNDNNNNNNNNNNNNNNNNNNNNNNNNNNI) is disordered. Over residues 251–292 (KPNPNNNNNNKDNDNDNNNNNNNNNNNNNNNNNNNNNNNNNN) the composition is skewed to low complexity. The ULD domain occupies 432–460 (NFYPFIMSSLNLMAKHKLLKDAYQKEKLK).

This sequence belongs to the peptidase C12 family.

The enzyme catalyses Thiol-dependent hydrolysis of ester, thioester, amide, peptide and isopeptide bonds formed by the C-terminal Gly of ubiquitin (a 76-residue protein attached to proteins as an intracellular targeting signal).. Functionally, thiol protease that recognizes and hydrolyzes a peptide bond at the C-terminal glycine of either ubiquitin or NEDD8. The sequence is that of Ubiquitin carboxyl-terminal hydrolase UCH54 from Plasmodium falciparum (isolate 3D7).